A 248-amino-acid chain; its full sequence is tRNA (guanine-N(1)-)-methyltransferase (248 aa).

S-adenosyl-L-methionine-binding positions include Gly-113 and 133–138 (LGDFVL).

It belongs to the RNA methyltransferase TrmD family. Homodimer.

It localises to the cytoplasm. The catalysed reaction is guanosine(37) in tRNA + S-adenosyl-L-methionine = N(1)-methylguanosine(37) in tRNA + S-adenosyl-L-homocysteine + H(+). Specifically methylates guanosine-37 in various tRNAs. The protein is tRNA (guanine-N(1)-)-methyltransferase of Albidiferax ferrireducens (strain ATCC BAA-621 / DSM 15236 / T118) (Rhodoferax ferrireducens).